Consider the following 56-residue polypeptide: Ovomucoid (56 aa).

The region spanning 6-56 (VDCSDHPKPACLQEQKPLCGSDNKTYDNKCSFCNAVVDSNGTLTLSHFGKC) is the Kazal-like domain. Disulfide bonds link cysteine 8-cysteine 38, cysteine 16-cysteine 35, and cysteine 24-cysteine 56. A glycan (N-linked (GlcNAc...) asparagine) is linked at asparagine 45.

It is found in the secreted. This Penelope jacquacu (Spix's guan) protein is Ovomucoid.